The primary structure comprises 886 residues: Methanogenesis regulatory histidine kinase FilI (886 aa).

The next 2 helical transmembrane spans lie at I7–C27 and V270–L290. Positions L290 to Q344 constitute an HAMP domain. The PAS domain occupies S349–E419. The region spanning F421–K473 is the PAC domain. One can recognise a Histidine kinase domain in the interval T674–P886. H677 is modified (phosphohistidine; by autocatalysis).

Post-translationally, autophosphorylated.

Its subcellular location is the cell membrane. The enzyme catalyses ATP + protein L-histidine = ADP + protein N-phospho-L-histidine.. Its function is as follows. Member of the two-component regulatory system FilI/FilRs, which is involved in the regulation of methanogenesis. Autophosphorylates and specifically transfers the phosphoryl group to both FilR1 and FilR2. Functionally, could also catalyze the synthesis of the quorum sensing (QS) signal molecules carboxyl-acyl homoserine lactones (AHLs), which regulate the transition of the cellular morphology from short cells to filaments and of the carbon metabolic flux from biomass formation to methane production. This is Methanogenesis regulatory histidine kinase FilI from Methanothrix harundinacea (strain 6Ac) (Methanosaeta harundinacea).